The following is a 270-amino-acid chain: Ribitol operon repressor (270 aa).

In terms of domain architecture, HTH lacI-type spans 1–61 (MKKITIYDLA…INRQASMLRS (61 aa)). The segment at residues 6-25 (IYDLAELSGVSASAVSAILN) is a DNA-binding region (H-T-H motif).

Its function is as follows. Repressor for the genes of the ribitol operon. Binds D-ribulose as an inducer. This is Ribitol operon repressor (rbtR) from Klebsiella aerogenes (Enterobacter aerogenes).